The primary structure comprises 388 residues: Alpha-2A adrenergic receptor (388 aa).

The Extracellular portion of the chain corresponds to 1 to 22; the sequence is MICGANATNGTNATKEYTLLVA. Residues N6, N9, and N12 are each glycosylated (N-linked (GlcNAc...) asparagine). Residues 23–48 traverse the membrane as a helical segment; it reads LPLSIAVGLLILLIIFGNVLVIIAVF. Over 49 to 59 the chain is Cytoplasmic; the sequence is TSRALRAPQNL. A helical transmembrane segment spans residues 60-85; sequence FLVSLASADILVATLVMPFSLANELM. Topologically, residues 86 to 95 are extracellular; the sequence is GMWTFGGVWC. Cysteines 95 and 169 form a disulfide. A helical transmembrane segment spans residues 96–118; the sequence is EIYLALDVLFCTASITHLCAISL. Residues 119-138 are Cytoplasmic-facing; the sequence is DRYWSITQAIEYNLKRTPQR. A helical membrane pass occupies residues 139–162; the sequence is IKRIIFIVWIIAAVISCPPLITMK. The Extracellular portion of the chain corresponds to 163-173; sequence KSEGDICDINK. A helical membrane pass occupies residues 174–198; the sequence is EKWYIVSSCIGSFFLPCIIMVLVYI. Topologically, residues 199 to 311 are cytoplasmic; sequence RIYQIAKKRT…RQNREKRFTF (113 aa). The tract at residues 208–291 is disordered; sequence TRAPPGDHRK…PGDGDKTEAC (84 aa). A compositionally biased stretch (basic and acidic residues) spans 212–231; sequence PGDHRKNEVGKKENDPHEKL. Residues 266 to 275 are compositionally biased toward basic residues; that stretch reads LKKKSSKGKT. A helical membrane pass occupies residues 312–337; that stretch reads VLAVVIGVFVICWFPFFFTYTFTAFC. The Extracellular segment spans residues 338–344; it reads DCCVPET. The chain crosses the membrane as a helical span at residues 345–368; the sequence is LFKFFFWFGYCNSSLNPIIYTIFN. The Cytoplasmic portion of the chain corresponds to 369–388; sequence NDFRRSFKKILCRRDKRRVV. C380 carries S-palmitoyl cysteine lipidation.

It belongs to the G-protein coupled receptor 1 family. Adrenergic receptor subfamily. ADRA2A sub-subfamily.

The protein resides in the cell membrane. Its function is as follows. Alpha-2 adrenergic receptors mediate the catecholamine-induced inhibition of adenylate cyclase through the action of G proteins. The order of potency for this receptor is dexmedetomidine &gt; oxymetazoline = epinephrine &gt; norepinephrine. In Danio rerio (Zebrafish), this protein is Alpha-2A adrenergic receptor.